A 305-amino-acid chain; its full sequence is Sulfate adenylyltransferase subunit 2 (305 aa).

Belongs to the PAPS reductase family. CysD subfamily. Heterodimer composed of CysD, the smaller subunit, and CysN.

It catalyses the reaction sulfate + ATP + H(+) = adenosine 5'-phosphosulfate + diphosphate. It participates in sulfur metabolism; hydrogen sulfide biosynthesis; sulfite from sulfate: step 1/3. In terms of biological role, with CysN forms the ATP sulfurylase (ATPS) that catalyzes the adenylation of sulfate producing adenosine 5'-phosphosulfate (APS) and diphosphate, the first enzymatic step in sulfur assimilation pathway. APS synthesis involves the formation of a high-energy phosphoric-sulfuric acid anhydride bond driven by GTP hydrolysis by CysN coupled to ATP hydrolysis by CysD. The polypeptide is Sulfate adenylyltransferase subunit 2 (Pseudomonas entomophila (strain L48)).